The sequence spans 116 residues: Small ribosomal subunit protein uS17 (116 aa).

Belongs to the universal ribosomal protein uS17 family. As to quaternary structure, part of the 30S ribosomal subunit.

Its function is as follows. One of the primary rRNA binding proteins, it binds specifically to the 5'-end of 16S ribosomal RNA. This is Small ribosomal subunit protein uS17 from Pyrococcus horikoshii (strain ATCC 700860 / DSM 12428 / JCM 9974 / NBRC 100139 / OT-3).